The sequence spans 776 residues: Glucocorticoid receptor (776 aa).

A compositionally biased stretch (polar residues) spans 1–11; the sequence is MDSKESLTSPS. The disordered stretch occupies residues 1-25; sequence MDSKESLTSPSEEIPSSVHGQERGN. The modulating stretch occupies residues 1-419; sequence MDSKESLTSP…LSAVGPPPKF (419 aa). Thr8 bears the Phosphothreonine mark. Omega-N-methylarginine is present on Arg23. Ser45, Ser113, and Ser134 each carry phosphoserine. Residues 157-178 form a disordered region; it reads PETPSDVSSEQQNLKGQTGTNG. The segment covering 161–174 has biased composition (polar residues); that stretch reads SDVSSEQQNLKGQT. Phosphoserine occurs at positions 203, 211, and 226. Lys258 participates in a covalent cross-link: Glycyl lysine isopeptide (Lys-Gly) (interchain with G-Cter in SUMO2). Residue Ser267 is modified to Phosphoserine. Glycyl lysine isopeptide (Lys-Gly) (interchain with G-Cter in SUMO); alternate cross-links involve residues Lys277 and Lys293. Residues Lys277 and Lys293 each participate in a glycyl lysine isopeptide (Lys-Gly) (interchain with G-Cter in SUMO2); alternate cross-link. Residues Ser307 and Ser404 each carry the phosphoserine modification. Positions 417–492 form a DNA-binding region, nuclear receptor; that stretch reads PKFCLVCSDE…AGMNLEARKT (76 aa). Residue Lys418 forms a Glycyl lysine isopeptide (Lys-Gly) (interchain with G-Cter in ubiquitin) linkage. 2 consecutive NR C4-type zinc fingers follow at residues 420 to 440 and 456 to 480; these read CLVC…CGSC and CAGR…YRKC. N6-acetyllysine is present on residues Lys479, Lys491, Lys493, and Lys494. The interaction with CLOCK stretch occupies residues 484–776; sequence GMNLEARKTK…NIKKLLFHQK (293 aa). Residues 486-522 are hinge; that stretch reads NLEARKTKKKIKGIQQTTTGISQETPENSANKTIVPA. In terms of domain architecture, NR LBD spans 523–757; it reads TLPQLTPTPV…FPEMLAEIIT (235 aa). The interval 531–696 is interaction with CRY1; the sequence is PVSLLEVIEP…EIRMTYIKEL (166 aa). Lys702 participates in a covalent cross-link: Glycyl lysine isopeptide (Lys-Gly) (interchain with G-Cter in SUMO).

It belongs to the nuclear hormone receptor family. NR3 subfamily. As to quaternary structure, heteromultimeric cytoplasmic complex with HSP90AA1, HSPA1A/HSPA1B, and FKBP5 or another immunophilin such as PPID, STIP1, or the immunophilin homolog PPP5C. Upon ligand binding FKBP5 dissociates from the complex and FKBP4 takes its place, thereby linking the complex to dynein and mediating transport to the nucleus, where the complex dissociates. Probably forms a complex composed of chaperones HSP90 and HSP70, co-chaperones CDC37, PPP5C, TSC1 and client protein TSC2, CDK4, AKT, RAF1 and NR3C1; this complex does not contain co-chaperones STIP1/HOP and PTGES3/p23. Directly interacts with UNC45A. Binds to DNA as a homodimer, and as heterodimer with NR3C2 or the retinoid X receptor. Binds STAT5A and STAT5B homodimers and heterodimers. Interacts with NRIP1, POU2F1, POU2F2 and TRIM28. Interacts with several coactivator complexes, including the SMARCA4 complex, CREBBP/EP300, TADA2L (Ada complex) and p160 coactivators such as NCOA2 and NCOA6. Interaction with BAG1 inhibits transactivation. Interacts with HEXIM1 and TGFB1I1. Interacts with NCOA1. Interacts with NCOA3, SMARCA4, SMARCC1, SMARCD1, and SMARCE1. Interacts with CLOCK, CRY1 and CRY2 in a ligand-dependent fashion. Interacts with CIART. Interacts with RWDD3. Interacts with UBE2I/UBC9 and this interaction is enhanced in the presence of RWDD3. Interacts with GRIP1. Interacts with NR4A3 (via nuclear receptor DNA-binding domain), represses transcription activity of NR4A3 on the POMC promoter Nur response element (NurRE). Directly interacts with PNRC2 to attract and form a complex with UPF1 and DCP1A; the interaction leads to rapid mRNA degradation. Interacts with GSK3B. Interacts with FNIP1 and FNIP2. Interacts (via C-terminus) with NR3C1 (via C-terminus). Interacts with MCM3AP. Interacts (via domain NR LBD) with HSP90AA1 and HSP90AB1. In the absence of hormonal ligand, interacts with TACC1. Post-translationally, acetylation by CLOCK reduces its binding to glucocorticoid response elements and its transcriptional activity. In terms of processing, increased proteasome-mediated degradation in response to glucocorticoids. Phosphorylated in the absence of hormone; becomes hyperphosphorylated in the presence of glucocorticoid. The Ser-203, Ser-226 and Ser-404-phosphorylated forms are mainly cytoplasmic, and the Ser-211-phosphorylated form is nuclear. Phosphorylation at Ser-211 increases transcriptional activity. Phosphorylation at Ser-203, Ser-226 and Ser-404 decreases signaling capacity. Phosphorylation at Ser-404 may protect from glucocorticoid-induced apoptosis. Phosphorylation at Ser-203 and Ser-211 is not required in regulation of chromosome segregation. May be dephosphorylated by PPP5C, attenuates NR3C1 action. Post-translationally, sumoylation at Lys-277 and Lys-293 negatively regulates its transcriptional activity. Sumoylation at Lys-702 positively regulates its transcriptional activity in the presence of RWDD3. Sumoylation at Lys-277 and Lys-293 is dispensable whereas sumoylation at Lys-702 is critical for the stimulatory effect of RWDD3 on its transcriptional activity. Heat shock increases sumoylation in a RWDD3-dependent manner. In terms of processing, ubiquitinated by UBR5, leading to its degradation: UBR5 specifically recognizes and binds ligand-bound NR3C1 when it is not associated with coactivators (NCOAs). In presence of NCOAs, the UBR5-degron is not accessible, preventing its ubiquitination and degradation.

It is found in the cytoplasm. The protein resides in the nucleus. Its subcellular location is the mitochondrion. It localises to the cytoskeleton. The protein localises to the spindle. It is found in the microtubule organizing center. The protein resides in the centrosome. Its subcellular location is the chromosome. It localises to the nucleoplasm. Its function is as follows. Receptor for glucocorticoids (GC). Has a dual mode of action: as a transcription factor that binds to glucocorticoid response elements (GRE), both for nuclear and mitochondrial DNA, and as a modulator of other transcription factors. Affects inflammatory responses, cellular proliferation and differentiation in target tissues. Involved in chromatin remodeling. Plays a role in rapid mRNA degradation by binding to the 5' UTR of target mRNAs and interacting with PNRC2 in a ligand-dependent manner which recruits the RNA helicase UPF1 and the mRNA-decapping enzyme DCP1A, leading to RNA decay. Could act as a coactivator for STAT5-dependent transcription upon growth hormone (GH) stimulation and could reveal an essential role of hepatic GR in the control of body growth. Mediates glucocorticoid-induced apoptosis. Promotes accurate chromosome segregation during mitosis. May act as a tumor suppressor. May play a negative role in adipogenesis through the regulation of lipolytic and antilipogenic gene expression. This Tupaia belangeri (Common tree shrew) protein is Glucocorticoid receptor (NR3C1).